Reading from the N-terminus, the 489-residue chain is N-succinylglutamate 5-semialdehyde dehydrogenase (489 aa).

221-226 is a binding site for NAD(+); that stretch reads GSSGTG. Catalysis depends on residues Glu-244 and Cys-278.

The protein belongs to the aldehyde dehydrogenase family. AstD subfamily.

The catalysed reaction is N-succinyl-L-glutamate 5-semialdehyde + NAD(+) + H2O = N-succinyl-L-glutamate + NADH + 2 H(+). It functions in the pathway amino-acid degradation; L-arginine degradation via AST pathway; L-glutamate and succinate from L-arginine: step 4/5. Catalyzes the NAD-dependent reduction of succinylglutamate semialdehyde into succinylglutamate. This is N-succinylglutamate 5-semialdehyde dehydrogenase from Sorangium cellulosum (strain So ce56) (Polyangium cellulosum (strain So ce56)).